We begin with the raw amino-acid sequence, 222 residues long: MSAFGHDEAWMEAGGFGLEAAERTEYQSLCKSKLLFLGEQSVGKTSIISRFMYNSFGCACQATVGIDFLSKTMYLEDQIVQLQLWDTAGQERFHSLIPSYIRDSTIAVVVYDITNINSFKETDKWVEHVRAERGDDVVIMLLGNKIDLDNKRQVTAEQGEEKSRNLNVMFIETSAKTGYNVKKLFRRVASALLSTRTSPPPKEGTVEIELESFEESGNRSYC.

Residues Ser41, Val42, Gly43, Lys44, Thr45, Ser46, and Thr63 each coordinate GTP. Residue Thr45 coordinates Mg(2+). Residues 58-66 (CACQATVGI) are switch-I. Positions 63 and 86 each coordinate Mg(2+). GTP contacts are provided by Gly89, Asn144, Lys145, Asp147, Ser174, Ala175, and Lys176. A switch-II region spans residues 89-105 (GQERFHSLIPSYIRDST). Residue Cys222 is the site of S-geranylgeranyl cysteine attachment.

It belongs to the small GTPase superfamily. Rab family. Mg(2+) serves as cofactor. Widely expressed in brain, testis, lung, heart, ovary, colon, kidney, uterus and spleen but not in liver.

It is found in the cytoplasm. The enzyme catalyses GTP + H2O = GDP + phosphate + H(+). Regulated by guanine nucleotide exchange factors (GEFs) which promote the exchange of bound GDP for free GTP. Regulated by GTPase activating proteins (GAPs) which increase the GTP hydrolysis activity. Inhibited by GDP dissociation inhibitors (GDIs). In terms of biological role, the small GTPases Rab are key regulators of intracellular membrane trafficking, from the formation of transport vesicles to their fusion with membranes. Rabs cycle between an inactive GDP-bound form and an active GTP-bound form that is able to recruit to membranes different sets of downstream effectors directly responsible for vesicle formation, movement, tethering and fusion. RAB41 is required for normal Golgi ribbon organization and ER-to-Golgi trafficking. The sequence is that of Ras-related protein Rab-41 from Homo sapiens (Human).